A 135-amino-acid chain; its full sequence is Succinate dehydrogenase assembly factor 2, mitochondrial (135 aa).

It belongs to the SDHAF2 family. Interacts with the flavoprotein subunit within the SDH catalytic dimer.

It localises to the mitochondrion matrix. Functionally, plays an essential role in the assembly of succinate dehydrogenase (SDH), an enzyme complex (also referred to as respiratory complex II) that is a component of both the tricarboxylic acid (TCA) cycle and the mitochondrial electron transport chain, and which couples the oxidation of succinate to fumarate with the reduction of ubiquinone (coenzyme Q) to ubiquinol. Required for flavinylation (covalent attachment of FAD) of the flavoprotein subunit of the SDH catalytic dimer. The sequence is that of Succinate dehydrogenase assembly factor 2, mitochondrial from Meyerozyma guilliermondii (strain ATCC 6260 / CBS 566 / DSM 6381 / JCM 1539 / NBRC 10279 / NRRL Y-324) (Yeast).